A 469-amino-acid chain; its full sequence is RNA-editing ligase 1, mitochondrial (469 aa).

The transit peptide at 1 to 44 directs the protein to the mitochondrion; that stretch reads MQLQRLGAPLLKRLVGGCIRQSTAPIMPCVVVSGSGVFLTPVRT. Residues 59–61, 86–92, R111, E159, F209, and 307–309 each bind ATP; these read IEI, EKVHGTN, and KLR. The active-site N6-AMP-lysine intermediate is K87. The tract at residues 450–469 is disordered; that stretch reads AAAQSEAIPPLSPAAPTKGE.

This sequence belongs to the RNA ligase 2 family. As to quaternary structure, component of the RNA editing complex (editosome), a 1600 kDa complex composed of at least 20 proteins. Interacts with terminal uridylyltransferase MEAT1.

The protein localises to the mitochondrion. The enzyme catalyses ATP + (ribonucleotide)n-3'-hydroxyl + 5'-phospho-(ribonucleotide)m = (ribonucleotide)n+m + AMP + diphosphate.. Functionally, essential for RNA editing. RNA editing in kinetoplastid mitochondria inserts and deletes uridylates at multiple sites in pre-mRNAs as directed by guide RNAs. This chain is RNA-editing ligase 1, mitochondrial (REL1), found in Trypanosoma brucei brucei.